A 258-amino-acid chain; its full sequence is UPF0246 protein YaaA (258 aa).

It belongs to the UPF0246 family.

The sequence is that of UPF0246 protein YaaA from Shigella boydii serotype 18 (strain CDC 3083-94 / BS512).